We begin with the raw amino-acid sequence, 96 residues long: Small ribosomal subunit protein uS19 (96 aa).

This sequence belongs to the universal ribosomal protein uS19 family.

Protein S19 forms a complex with S13 that binds strongly to the 16S ribosomal RNA. This is Small ribosomal subunit protein uS19 from Solibacter usitatus (strain Ellin6076).